The sequence spans 368 residues: o-succinylbenzoate synthase (368 aa).

Lys-183 acts as the Proton donor in catalysis. Mg(2+)-binding residues include Asp-213, Glu-239, and Asp-264. The active-site Proton acceptor is the Lys-290.

Belongs to the mandelate racemase/muconate lactonizing enzyme family. MenC type 1 subfamily. In terms of assembly, monomer. A divalent metal cation serves as cofactor.

It carries out the reaction (1R,6R)-6-hydroxy-2-succinyl-cyclohexa-2,4-diene-1-carboxylate = 2-succinylbenzoate + H2O. It functions in the pathway quinol/quinone metabolism; 1,4-dihydroxy-2-naphthoate biosynthesis; 1,4-dihydroxy-2-naphthoate from chorismate: step 4/7. Its pathway is cofactor biosynthesis; phylloquinone biosynthesis. Its function is as follows. Converts 2-succinyl-6-hydroxy-2,4-cyclohexadiene-1-carboxylate (SHCHC) to 2-succinylbenzoate (OSB). Does not show N-succinylamino acid racemase (NSAR) activity with N-succinyl-L-phenylglycine as substrate. This is o-succinylbenzoate synthase from Desulfotalea psychrophila (strain LSv54 / DSM 12343).